The primary structure comprises 389 residues: Leucine aminopeptidase 1 (389 aa).

The signal sequence occupies residues Met-1–Ala-18. Positions Ala-19–Ser-89 are excised as a propeptide. 3 N-linked (GlcNAc...) asparagine glycosylation sites follow: Asn-99, Asn-156, and Asn-180. The Zn(2+) site is built by His-188, Asp-207, Glu-246, and Asp-273. A disulfide bond links Cys-322 and Cys-326. His-355 serves as a coordination point for Zn(2+).

This sequence belongs to the peptidase M28 family. M28E subfamily. In terms of assembly, monomer. It depends on Zn(2+) as a cofactor.

The protein localises to the secreted. Extracellular aminopeptidase that allows assimilation of proteinaceous substrates. The protein is Leucine aminopeptidase 1 (LAP1) of Phaeosphaeria nodorum (strain SN15 / ATCC MYA-4574 / FGSC 10173) (Glume blotch fungus).